Consider the following 1147-residue polypeptide: Putative ATP-dependent RNA helicase L377 (1147 aa).

The region spanning 108 to 315 (INPNTPYRGL…VELINYLRPK (208 aa)) is the Helicase ATP-binding domain. 121–128 (WGTGVGKS) is an ATP binding site. Positions 264-267 (DEAH) match the DEAH box motif.

It belongs to the DEAD box helicase family. DEAH subfamily.

It localises to the virion. It carries out the reaction ATP + H2O = ADP + phosphate + H(+). This is Putative ATP-dependent RNA helicase L377 from Acanthamoeba polyphaga (Amoeba).